Consider the following 231-residue polypeptide: Uridylate kinase (231 aa).

Residue 6–9 (KLSG) coordinates ATP. The interval 14–19 (GEGGRG) is involved in allosteric activation by GTP. ATP-binding residues include Gly49 and Arg53. Residues Asp66 and 127-134 (TSNPFFTT) contribute to the UMP site. 3 residues coordinate ATP: Thr154, Tyr160, and Asp163.

This sequence belongs to the UMP kinase family. As to quaternary structure, homohexamer.

The protein resides in the cytoplasm. It catalyses the reaction UMP + ATP = UDP + ADP. It participates in pyrimidine metabolism; CTP biosynthesis via de novo pathway; UDP from UMP (UMPK route): step 1/1. With respect to regulation, allosterically activated by GTP. Inhibited by UTP. Functionally, catalyzes the reversible phosphorylation of UMP to UDP. The polypeptide is Uridylate kinase (Thermotoga petrophila (strain ATCC BAA-488 / DSM 13995 / JCM 10881 / RKU-1)).